A 341-amino-acid chain; its full sequence is MSGDTEEVTRLRKPRFSYEENQILIREVRAHYPMLYGAQSRRLSVAERRRVWEGIAAKINAITNWKRTAQEVQKRWNDFKRRTKEKLARVPHSTQSGTAEEAMTAEEETIFAILGPGVMPGSSHYGPVTHLGAMDFNPSGPGSSSPETSLSAPCAPIEAPLLLHPKESPSPTSQLHIVQLPHLTPSPDPSECPSPPPPGSGTPLLTPSGVAQHYDPTVAMLRAQQETAEAIRHLTYTLRQSMDRLTNVLAAILPLVPHQPPESPTPSGILGPVYYPTKTEPESEPCCPVTYEEENGEDGGEEEIQEVIAEPPRSPSPPPPNKRKRFGYLSQRKRRGRWKNL.

Residues 8–80 enclose the Myb-like domain; sequence VTRLRKPRFS…EVQKRWNDFK (73 aa). Disordered regions lie at residues 84 to 103, 180 to 210, and 309 to 341; these read KEKL…EEAM, LPHL…PSGV, and AEPP…WKNL. Positions 184–200 are enriched in pro residues; it reads TPSPDPSECPSPPPPGS. Basic residues predominate over residues 321–341; that stretch reads NKRKRFGYLSQRKRRGRWKNL.

The protein localises to the nucleus. Functionally, transcriptional repressor; DNA-binding protein that specifically recognizes the core sequence 5'-YAAC[GT]G-3'. The sequence is that of Myb-related transcription factor, partner of profilin (mypop) from Xenopus laevis (African clawed frog).